A 312-amino-acid polypeptide reads, in one-letter code: Ornithine carbamoyltransferase (312 aa).

Carbamoyl phosphate is bound by residues 57–60 (STRT), Gln-84, Arg-108, and 135–138 (HPCQ). L-ornithine contacts are provided by residues Asn-166, Asp-226, and 230 to 231 (SM). Residues 265–266 (CL) and Arg-293 each bind carbamoyl phosphate.

It belongs to the aspartate/ornithine carbamoyltransferase superfamily. OTCase family.

Its subcellular location is the cytoplasm. The catalysed reaction is carbamoyl phosphate + L-ornithine = L-citrulline + phosphate + H(+). It functions in the pathway amino-acid degradation; L-arginine degradation via ADI pathway; carbamoyl phosphate from L-arginine: step 2/2. In terms of biological role, reversibly catalyzes the transfer of the carbamoyl group from carbamoyl phosphate (CP) to the N(epsilon) atom of ornithine (ORN) to produce L-citrulline. The protein is Ornithine carbamoyltransferase of Brucella abortus (strain 2308).